The chain runs to 103 residues: Large ribosomal subunit protein uL24 (103 aa).

Belongs to the universal ribosomal protein uL24 family. Part of the 50S ribosomal subunit.

Its function is as follows. One of two assembly initiator proteins, it binds directly to the 5'-end of the 23S rRNA, where it nucleates assembly of the 50S subunit. Functionally, one of the proteins that surrounds the polypeptide exit tunnel on the outside of the subunit. This is Large ribosomal subunit protein uL24 from Pasteurella multocida (strain Pm70).